The following is an 83-amino-acid chain: Large ribosomal subunit protein eL37 (83 aa).

4 residues coordinate Zn(2+): C19, C22, C34, and C37. A C4-type zinc finger spans residues 19–37 (CRRCGRNSYHVQWERCAAC).

Belongs to the eukaryotic ribosomal protein eL37 family. The cofactor is Zn(2+).

In terms of biological role, binds to the 23S rRNA. The sequence is that of Large ribosomal subunit protein eL37 (RPL37) from Leishmania donovani.